A 32-amino-acid chain; its full sequence is Seminal plasma protein PDC-109 (32 aa).

A disordered region spans residues Asp-1–Asn-32. A glycan (O-linked (GalNAc...) threonine) is linked at Thr-11. In terms of domain architecture, Fibronectin type-II spans His-19–Asn-32.

This sequence belongs to the seminal plasma protein family. As to quaternary structure, homodimer.

The protein localises to the secreted. Its function is as follows. Could enhance the fertilizing capacity of bull spermatozoa upon interaction with heparin-like glycosaminoglycans present in the female genital tract. Exhibits both simulatory and inhibitory actions on the release of pituitary gonadotropins. Binds to heparin and gelatin. The polypeptide is Seminal plasma protein PDC-109 (Bos indicus (Zebu)).